The sequence spans 292 residues: Calcium-binding protein CBP (292 aa).

The interval M1 to P80 is disordered. Positions Y12–G21 are enriched in gly residues. Over residues A22–A40 the composition is skewed to pro residues. EF-hand domains lie at G121–S156 and Y187–S222. Ca(2+) contacts are provided by D134, D136, S138, M140, E145, D200, D202, S204, K206, and E211.

Its function is as follows. Potential calcium sensor. This chain is Calcium-binding protein CBP, found in Oryza sativa subsp. japonica (Rice).